We begin with the raw amino-acid sequence, 568 residues long: T-complex protein 1 subunit theta (568 aa).

Lys-15 participates in a covalent cross-link: Glycyl lysine isopeptide (Lys-Gly) (interchain with G-Cter in ubiquitin). Ser-505 is subject to Phosphoserine.

It belongs to the TCP-1 chaperonin family. In terms of assembly, heterooligomeric complex of about 850 to 900 kDa that forms two stacked rings, 12 to 16 nm in diameter.

Its subcellular location is the cytoplasm. Functionally, molecular chaperone; assists the folding of proteins upon ATP hydrolysis. Known to play a role, in vitro, in the folding of actin and tubulin. In yeast may play a role in mitotic spindle formation. This Saccharomyces cerevisiae (strain ATCC 204508 / S288c) (Baker's yeast) protein is T-complex protein 1 subunit theta (CCT8).